A 236-amino-acid polypeptide reads, in one-letter code: Aspartate/glutamate leucyltransferase (236 aa).

This sequence belongs to the R-transferase family. Bpt subfamily.

It is found in the cytoplasm. The catalysed reaction is N-terminal L-glutamyl-[protein] + L-leucyl-tRNA(Leu) = N-terminal L-leucyl-L-glutamyl-[protein] + tRNA(Leu) + H(+). The enzyme catalyses N-terminal L-aspartyl-[protein] + L-leucyl-tRNA(Leu) = N-terminal L-leucyl-L-aspartyl-[protein] + tRNA(Leu) + H(+). Functions in the N-end rule pathway of protein degradation where it conjugates Leu from its aminoacyl-tRNA to the N-termini of proteins containing an N-terminal aspartate or glutamate. The sequence is that of Aspartate/glutamate leucyltransferase from Halorhodospira halophila (strain DSM 244 / SL1) (Ectothiorhodospira halophila (strain DSM 244 / SL1)).